A 262-amino-acid polypeptide reads, in one-letter code: Expansin-A7 (262 aa).

Residues 1–30 (MGPISSSWSFNKFFSIVFVVFAISGEFVAG) form the signal peptide. Residues 55–167 (GGACGYGNLF…RRVPCQRSGG (113 aa)) enclose the Expansin-like EG45 domain. 3 disulfide bridges follow: cysteine 58-cysteine 86, cysteine 89-cysteine 162, and cysteine 94-cysteine 100. The 81-residue stretch at 177-257 (YWLLIFVMNV…NWSGGKTYKS (81 aa)) folds into the Expansin-like CBD domain.

This sequence belongs to the expansin family. Expansin A subfamily.

The protein localises to the secreted. The protein resides in the cell wall. It is found in the membrane. Functionally, causes loosening and extension of plant cell walls by disrupting non-covalent bonding between cellulose microfibrils and matrix glucans. No enzymatic activity has been found. The chain is Expansin-A7 (EXPA7) from Arabidopsis thaliana (Mouse-ear cress).